Consider the following 355-residue polypeptide: Biotin synthase (355 aa).

One can recognise a Radical SAM core domain in the interval 51–275 (NTVKVNYLVN…VCPDKEIRIA (225 aa)). [4Fe-4S] cluster-binding residues include C66, C70, and C73. Residues C110, C143, C203, and R273 each contribute to the [2Fe-2S] cluster site.

The protein belongs to the radical SAM superfamily. Biotin synthase family. Homodimer. Requires [4Fe-4S] cluster as cofactor. It depends on [2Fe-2S] cluster as a cofactor.

The enzyme catalyses (4R,5S)-dethiobiotin + (sulfur carrier)-SH + 2 reduced [2Fe-2S]-[ferredoxin] + 2 S-adenosyl-L-methionine = (sulfur carrier)-H + biotin + 2 5'-deoxyadenosine + 2 L-methionine + 2 oxidized [2Fe-2S]-[ferredoxin]. It functions in the pathway cofactor biosynthesis; biotin biosynthesis; biotin from 7,8-diaminononanoate: step 2/2. Catalyzes the conversion of dethiobiotin (DTB) to biotin by the insertion of a sulfur atom into dethiobiotin via a radical-based mechanism. This is Biotin synthase from Saccharopolyspora erythraea (strain ATCC 11635 / DSM 40517 / JCM 4748 / NBRC 13426 / NCIMB 8594 / NRRL 2338).